The chain runs to 1366 residues: DNA-directed RNA polymerase subunit beta' (1366 aa).

The segment covering 1–23 has biased composition (basic residues); sequence MTSSKPKKSSRVRKTSKNSKKNN. Residues 1-25 form a disordered region; the sequence is MTSSKPKKSSRVRKTSKNSKKNNKI. Residues cysteine 248, cysteine 315, cysteine 322, and cysteine 325 each coordinate Zn(2+). Positions 1290–1366 are disordered; the sequence is DYTVDMPQSP…LQEEGLLSDE (77 aa). Positions 1295–1305 are enriched in polar residues; that stretch reads MPQSPTVSSTA. Low complexity predominate over residues 1354–1366; sequence LEGLQEEGLLSDE.

It belongs to the RNA polymerase beta' chain family. RpoC2 subfamily. In cyanobacteria the RNAP catalytic core is composed of 2 alpha, 1 beta, 1 beta', 1 gamma and 1 omega subunit. When a sigma factor is associated with the core the holoenzyme is formed, which can initiate transcription. The cofactor is Zn(2+).

The catalysed reaction is RNA(n) + a ribonucleoside 5'-triphosphate = RNA(n+1) + diphosphate. In terms of biological role, DNA-dependent RNA polymerase catalyzes the transcription of DNA into RNA using the four ribonucleoside triphosphates as substrates. The sequence is that of DNA-directed RNA polymerase subunit beta' from Prochlorococcus marinus (strain MIT 9515).